Reading from the N-terminus, the 829-residue chain is RNA-directed RNA polymerase (829 aa).

The segment at 1–39 is disordered; it reads MKEPVDCRLSTPAGFSGTVPPPGRTKAARPGTIPVRRSR.

As to quaternary structure, forms a ribonucleoprotein complex with the 20S RNA, where a single polymerase molecule binds to a single viral RNA genome. Since the viral RNA is not encapsidated, ribonucleoprotein complex formation appears to be the strategy to survive in the host as persistent virus.

The protein localises to the host cytoplasm. The catalysed reaction is RNA(n) + a ribonucleoside 5'-triphosphate = RNA(n+1) + diphosphate. Its function is as follows. RNA-directed RNA polymerase that replicates the viral (+) and (-) genome. The sequence is that of RNA-directed RNA polymerase from Saccharomyces cerevisiae (Baker's yeast).